A 130-amino-acid chain; its full sequence is Large ribosomal subunit protein bL20 (130 aa).

This sequence belongs to the bacterial ribosomal protein bL20 family.

Binds directly to 23S ribosomal RNA and is necessary for the in vitro assembly process of the 50S ribosomal subunit. It is not involved in the protein synthesizing functions of that subunit. This chain is Large ribosomal subunit protein bL20, found in Clavibacter sepedonicus (Clavibacter michiganensis subsp. sepedonicus).